Here is a 361-residue protein sequence, read N- to C-terminus: Cdc42 effector protein 1 (361 aa).

Positions 1 to 29 (MPGPQGAGGAPAMNLGKLSPVGWVSSSQG) are disordered. 2 positions are modified to phosphoserine: Ser-19 and Ser-27. Phosphothreonine is present on Thr-34. The CRIB domain maps to 38–52 (ISPPLGDFRHTMHVG). Ser-39 is modified (phosphoserine). The residue at position 53 (Arg-53) is an Omega-N-methylarginine. 11 positions are modified to phosphoserine: Ser-65, Ser-73, Ser-77, Ser-101, Ser-113, Ser-121, Ser-139, Ser-180, Ser-190, Ser-192, and Ser-195. The disordered stretch occupies residues 161–186 (CTISRLPRPEKPRDRDRDSSFPAEPE). Basic and acidic residues predominate over residues 167–186 (PRPEKPRDRDRDSSFPAEPE). Disordered stretches follow at residues 218–300 (EGSA…SRHH) and 320–361 (SWGS…EVKV). Tandem repeats lie at residues 220-226 (SAAETPA), 229-235 (PAASPPA), 236-242 (SVANPPA), and 243-249 (PASSPSL). The 4 X 7 AA tandem repeats of [PT]-[AT]-A-[ENT]-[PT]-[PTS]-[AG] stretch occupies residues 220 to 249 (SAAETPAPAPAASPPASVANPPAPASSPSL). Ser-270, Ser-320, and Ser-323 each carry phosphoserine. Positions 332–347 (QAGSRTPVPSTVQANT) are enriched in polar residues. Residues 351 to 361 (ADAEEDDEVKV) show a composition bias toward acidic residues.

It belongs to the BORG/CEP family. In terms of assembly, interacts with RHOQ and CDC42, in a GTP-dependent manner.

It is found in the endomembrane system. The protein resides in the cytoplasm. The protein localises to the cytoskeleton. Functionally, probably involved in the organization of the actin cytoskeleton. Induced membrane extensions in fibroblasts. The chain is Cdc42 effector protein 1 from Bos taurus (Bovine).